The chain runs to 491 residues: UDP-N-acetylmuramate--L-alanine ligase (491 aa).

Residue 126–132 (GTHGKTT) participates in ATP binding.

It belongs to the MurCDEF family.

Its subcellular location is the cytoplasm. The enzyme catalyses UDP-N-acetyl-alpha-D-muramate + L-alanine + ATP = UDP-N-acetyl-alpha-D-muramoyl-L-alanine + ADP + phosphate + H(+). The protein operates within cell wall biogenesis; peptidoglycan biosynthesis. In terms of biological role, cell wall formation. This is UDP-N-acetylmuramate--L-alanine ligase from Yersinia enterocolitica serotype O:8 / biotype 1B (strain NCTC 13174 / 8081).